The sequence spans 512 residues: Probable DNA ligase (512 aa).

ATP is bound at residue glutamate 208. Catalysis depends on lysine 210, which acts as the N6-AMP-lysine intermediate. Arginine 215, arginine 230, glutamate 259, phenylalanine 299, arginine 374, and lysine 380 together coordinate ATP.

The protein belongs to the ATP-dependent DNA ligase family. It depends on Mg(2+) as a cofactor.

It carries out the reaction ATP + (deoxyribonucleotide)n-3'-hydroxyl + 5'-phospho-(deoxyribonucleotide)m = (deoxyribonucleotide)n+m + AMP + diphosphate.. In terms of biological role, DNA ligase that seals nicks in double-stranded DNA during DNA replication, DNA recombination and DNA repair. In Streptomyces coelicolor (strain ATCC BAA-471 / A3(2) / M145), this protein is Probable DNA ligase.